The sequence spans 1280 residues: Multidrug resistance protein 1 (1280 aa).

Over 1–72 (MSRAHAAYAN…YADATDRVLM (72 aa)) the chain is Cytoplasmic. The ABC transmembrane type-1 1 domain maps to 72 to 357 (MIAGTAFAVA…VAPSRTAFTE (286 aa)). A run of 6 helical transmembrane segments spans residues 73-93 (IAGT…SFIF), 120-140 (YVGI…TVAA), 189-209 (KLSQ…AGFV), 216-236 (LMMI…GSIV), 297-317 (LSAA…FFFG), and 326-345 (RDMA…SFGL). Residues 346-712 (GFVAPSRTAF…MRMNKDKAWA (367 aa)) are Cytoplasmic-facing. An ABC transporter 1 domain is found at 391-634 (IEFRNVRFAY…DGEFAAVAKM (244 aa)). 426–433 (GASGCGKS) lines the ATP pocket. 6 consecutive transmembrane segments (helical) span residues 713–733 (VALG…SSIV), 762–781 (PLFI…HGFY), 837–857 (IGLK…GFIY), 858–878 (QWKL…CSLT), 938–958 (IIAG…YALC), and 976–996 (VMIA…AGAF). An ABC transmembrane type-1 2 domain is found at 713–1002 (VALGILSSVV…AGAFATKLAD (290 aa)). The ABC transporter 2 domain maps to 1036 to 1274 (IEYRNVQFIY…GGEYKTRYDL (239 aa)). Residue 1071–1078 (GQTGCGKS) coordinates ATP. Asn-1113 carries N-linked (GlcNAc...) asparagine glycosylation.

The protein belongs to the ABC transporter superfamily. ABCB family. Multidrug resistance exporter (TC 3.A.1.201) subfamily.

It is found in the membrane. The catalysed reaction is ATP + H2O + xenobioticSide 1 = ADP + phosphate + xenobioticSide 2.. In terms of biological role, energy-dependent efflux pump responsible for decreased drug accumulation in multi-drug-resistant cells. Confers vinblastine resistance. The chain is Multidrug resistance protein 1 (MDR1) from Leishmania enriettii.